The following is a 329-amino-acid chain: MTLRNDWTRDEIQALYDQPFLDLVFQAQQVHREHFSANTIQVSTLLSIKTGKCPEDCKYCSQSAHYDSKLEAEKRIAVDKVISEAKAAKDSGSSRFCMGAAWRNPHERDMPYVLEMVREVKALGLETCMTLGMLNQSQAERLSDAGLDYYNHNLDTSREYYNNIISTRTFDDRLNTLDHVRSAGMKVCSGGIVGLGEQKQDRIGLLHELATLPIHPESVPINMLVPIEGTPLADVEKLDVTEWIRTIAVARIIMPYSYIRLSAGRESLSDSDQALAFMAGANSLFSGDKLLTTPNAGEGKDQVLFAKLGLVAEKPKVSVRAMAVDAMSA.

The region spanning 38–262 is the Radical SAM core domain; the sequence is NTIQVSTLLS…IMPYSYIRLS (225 aa). Cys-53, Cys-57, and Cys-60 together coordinate [4Fe-4S] cluster. Residues Cys-97, Cys-128, Cys-188, and Arg-260 each contribute to the [2Fe-2S] cluster site.

It belongs to the radical SAM superfamily. Biotin synthase family. As to quaternary structure, homodimer. It depends on [4Fe-4S] cluster as a cofactor. Requires [2Fe-2S] cluster as cofactor.

It catalyses the reaction (4R,5S)-dethiobiotin + (sulfur carrier)-SH + 2 reduced [2Fe-2S]-[ferredoxin] + 2 S-adenosyl-L-methionine = (sulfur carrier)-H + biotin + 2 5'-deoxyadenosine + 2 L-methionine + 2 oxidized [2Fe-2S]-[ferredoxin]. Its pathway is cofactor biosynthesis; biotin biosynthesis; biotin from 7,8-diaminononanoate: step 2/2. Catalyzes the conversion of dethiobiotin (DTB) to biotin by the insertion of a sulfur atom into dethiobiotin via a radical-based mechanism. The polypeptide is Biotin synthase (Acinetobacter baylyi (strain ATCC 33305 / BD413 / ADP1)).